Reading from the N-terminus, the 368-residue chain is Ribosomal RNA large subunit methyltransferase M (368 aa).

Residues S189, 222–225 (CPGG), D241, D261, and D278 each bind S-adenosyl-L-methionine. K307 serves as the catalytic Proton acceptor.

This sequence belongs to the class I-like SAM-binding methyltransferase superfamily. RNA methyltransferase RlmE family. RlmM subfamily. As to quaternary structure, monomer.

It localises to the cytoplasm. The catalysed reaction is cytidine(2498) in 23S rRNA + S-adenosyl-L-methionine = 2'-O-methylcytidine(2498) in 23S rRNA + S-adenosyl-L-homocysteine + H(+). Catalyzes the 2'-O-methylation at nucleotide C2498 in 23S rRNA. The polypeptide is Ribosomal RNA large subunit methyltransferase M (Yersinia pseudotuberculosis serotype O:1b (strain IP 31758)).